The chain runs to 594 residues: Glutamate decarboxylase 1 (594 aa).

Over residues 1–13 (MASSTPSSSATSS) the composition is skewed to low complexity. The tract at residues 1 to 22 (MASSTPSSSATSSNAGADPNTA) is disordered. Ser-78 is subject to Phosphoserine. 190–192 (QLS) is a 4-aminobutanoate binding site. Lys-405 carries the post-translational modification N6-(pyridoxal phosphate)lysine. Arg-567 is a 4-aminobutanoate binding site.

This sequence belongs to the group II decarboxylase family. In terms of assembly, homodimer. Pyridoxal 5'-phosphate is required as a cofactor.

It carries out the reaction L-glutamate + H(+) = 4-aminobutanoate + CO2. In terms of biological role, catalyzes the synthesis of the inhibitory neurotransmitter gamma-aminobutyric acid (GABA) with pyridoxal 5'-phosphate as cofactor. The polypeptide is Glutamate decarboxylase 1 (GAD1) (Canis lupus familiaris (Dog)).